Here is a 358-residue protein sequence, read N- to C-terminus: MNTEKDRLLTFQMWPLTFLSPADLAKAGFYYIGPGDRVACFACGGKLSNWEPKDDAMTEHLRHFPNCPFLGNQLQDSSRYTVSNLSMQTYAARFKTFCNWPSSIPVHPEQLASAGFYYMGHSDDVKCFCCDGGLRCWESGDDPWVEHAKWFPRCEYLIRIKGQEFISRVQASYPHLLEQLLSTSDNPEDENAEPPNDLSLIRKNRMALFQHLTCVLPILDSLLIARVISEQEHDVIKQKTQTSLQARELIDIILVKGNYAATIFKNSLQEIDPMLYKHLFVQQDIKYIPTENVSDLSMEEQLRRLQEERTCKVCMDKEVSIVFIPCGHLVVCKDCAPSLRKCPICRGTIKGTVRTFLS.

BIR repeat units lie at residues 4–70 (EKDR…CPFL) and 90–157 (YAAR…CEYL). Zn(2+) contacts are provided by cysteine 127, cysteine 130, histidine 147, and cysteine 154. The region spanning 193-283 (EPPNDLSLIR…MLYKHLFVQQ (91 aa)) is the CARD domain. The segment at 311 to 346 (CKVCMDKEVSIVFIPCGHLVVCKDCAPSLRKCPICR) adopts an RING-type zinc-finger fold.

This sequence belongs to the IAP family.

The polypeptide is Putative inhibitor of apoptosis (PIAP) (Sus scrofa (Pig)).